The sequence spans 157 residues: Large ribosomal subunit protein uL15 (157 aa).

The interval 1-64 (MKLNEIPAVP…MPLQRRLPKR (64 aa)) is disordered. The segment covering 21–31 (RGPGSGNGKTA) has biased composition (gly residues).

It belongs to the universal ribosomal protein uL15 family. Part of the 50S ribosomal subunit.

Functionally, binds to the 23S rRNA. This Magnetococcus marinus (strain ATCC BAA-1437 / JCM 17883 / MC-1) protein is Large ribosomal subunit protein uL15.